The following is a 143-amino-acid chain: Nucleoside diphosphate kinase (143 aa).

The ATP site is built by lysine 11, phenylalanine 59, arginine 87, threonine 93, arginine 104, and asparagine 114. The Pros-phosphohistidine intermediate role is filled by histidine 117.

Belongs to the NDK family. As to quaternary structure, homotetramer. Requires Mg(2+) as cofactor.

The protein localises to the cytoplasm. The enzyme catalyses a 2'-deoxyribonucleoside 5'-diphosphate + ATP = a 2'-deoxyribonucleoside 5'-triphosphate + ADP. It catalyses the reaction a ribonucleoside 5'-diphosphate + ATP = a ribonucleoside 5'-triphosphate + ADP. Functionally, major role in the synthesis of nucleoside triphosphates other than ATP. The ATP gamma phosphate is transferred to the NDP beta phosphate via a ping-pong mechanism, using a phosphorylated active-site intermediate. This Shewanella sediminis (strain HAW-EB3) protein is Nucleoside diphosphate kinase.